Here is a 91-residue protein sequence, read N- to C-terminus: Small ribosomal subunit protein bS16 (91 aa).

The protein belongs to the bacterial ribosomal protein bS16 family.

This Staphylococcus aureus (strain Mu3 / ATCC 700698) protein is Small ribosomal subunit protein bS16.